A 220-amino-acid polypeptide reads, in one-letter code: Deoxyribose-phosphate aldolase (220 aa).

The active-site Proton donor/acceptor is Asp-89. The Schiff-base intermediate with acetaldehyde role is filled by Lys-151. Lys-180 functions as the Proton donor/acceptor in the catalytic mechanism.

Belongs to the DeoC/FbaB aldolase family. DeoC type 1 subfamily.

It localises to the cytoplasm. The enzyme catalyses 2-deoxy-D-ribose 5-phosphate = D-glyceraldehyde 3-phosphate + acetaldehyde. The protein operates within carbohydrate degradation; 2-deoxy-D-ribose 1-phosphate degradation; D-glyceraldehyde 3-phosphate and acetaldehyde from 2-deoxy-alpha-D-ribose 1-phosphate: step 2/2. Its function is as follows. Catalyzes a reversible aldol reaction between acetaldehyde and D-glyceraldehyde 3-phosphate to generate 2-deoxy-D-ribose 5-phosphate. This is Deoxyribose-phosphate aldolase from Macrococcus caseolyticus (strain JCSC5402) (Macrococcoides caseolyticum).